The primary structure comprises 428 residues: uncharacterized protein (428 aa).

10 helical membrane passes run 26–46 (VALTCAAIMVGAGIVGSDDVF), 51–71 (AGIDWDVIFLLLGMMIIVSVL), 90–110 (AAPLRIMILLVLVTALGSALL), 135–155 (TPFLVAEVFASNVGGAATLVG), 177–197 (MAPAVLVVMIALIGLLPWLLG), 223–243 (LLIKCGVVLVLVFAAFIAHPV), 278–298 (TLLFFAGLFVMVGALVKTGVV), 314–334 (LLTVGLILGISAPVSGIIDNI), 359–379 (TFWWALALSADFGGNLTAVAA), and 407–427 (VVTAVSLVLSAVYLWLRYFVF).

It belongs to the CitM (TC 2.A.11) transporter family.

It is found in the cell membrane. This is an uncharacterized protein from Mycobacterium tuberculosis (strain CDC 1551 / Oshkosh).